A 197-amino-acid chain; its full sequence is Small ribosomal subunit protein uS7 (197 aa).

Belongs to the universal ribosomal protein uS7 family. Part of the 30S ribosomal subunit.

In terms of biological role, one of the primary rRNA binding proteins, it binds directly to 16S rRNA where it nucleates assembly of the head domain of the 30S subunit. Is located at the subunit interface close to the decoding center. The chain is Small ribosomal subunit protein uS7 from Methanopyrus kandleri (strain AV19 / DSM 6324 / JCM 9639 / NBRC 100938).